The primary structure comprises 890 residues: Potassium/sodium hyperpolarization-activated cyclic nucleotide-gated channel 1 (890 aa).

The segment at 1-93 is disordered; that stretch reads MEGGGKPNSS…AEGPRRQYGF (93 aa). Residues 1–142 lie on the Cytoplasmic side of the membrane; that stretch reads MEGGGKPNSS…WIIHPYSDFR (142 aa). Over residues 8-34 the composition is skewed to low complexity; that stretch reads NSSSNSRDDGNSVFPAKASATGAGPAA. A compositionally biased stretch (gly residues) spans 62-77; sequence DGGGGGGGGGGGGEEP. A helical transmembrane segment spans residues 143 to 164; the sequence is FYWDLIMLIMMVGNLVIIPVGI. Residues 165-173 are Extracellular-facing; that stretch reads TFFTEQTTT. The chain crosses the membrane as a helical span at residues 174 to 194; sequence PWIIFNVASDTVFLLDLIMNF. Over 195-215 the chain is Cytoplasmic; that stretch reads RTGTVNEDSSEIILDPKVIKM. A helical transmembrane segment spans residues 216 to 236; it reads NYLKSWFVVDFISSIPVDYIF. The Extracellular portion of the chain corresponds to 237 to 260; that stretch reads LIVEKGMDSEVYKTARALRIVRFT. The helical; Voltage-sensor transmembrane segment at 261–281 threads the bilayer; the sequence is KILSLLRLLRLSRLIRYIHQW. Residues 282 to 295 lie on the Cytoplasmic side of the membrane; sequence EEIFHMTYDLASAV. The helical transmembrane segment at 296-318 threads the bilayer; that stretch reads VRIFNLIGMMLLLCHWDGCLQFL. The Extracellular segment spans residues 319–344; it reads VPLLQDFPPDCWVSLNEMVNDSWGKQ. A glycan (N-linked (GlcNAc...) asparagine) is linked at Asn-338. Residues 345-366 constitute an intramembrane region (pore-forming); it reads YSYALFKAMSHMLCIGYGAQAP. The Selectivity filter motif lies at 358–362; sequence CIGYG. Over 367-371 the chain is Extracellular; that stretch reads VSMSD. The helical transmembrane segment at 372-392 threads the bilayer; the sequence is LWITMLSMIVGATCYAMFVGH. Topologically, residues 393–890 are cytoplasmic; the sequence is ATALIQSLDS…AEKPRFASNL (498 aa). Residues Gly-539, Glu-540, Cys-542, Arg-549, Thr-550, Arg-590, and Arg-593 each coordinate 3',5'-cyclic AMP. Composition is skewed to low complexity over residues 644-691 and 731-749; these read MTTL…PQPS and QQQP…TQPQ. Disordered regions lie at residues 644–692, 725–796, and 845–890; these read MTTL…QPSA, SQLS…LPHE, and MSSG…ASNL. The segment covering 770–780 has biased composition (polar residues); sequence STQALHNTNLT. The span at 854–865 shows a compositional bias: pro residues; sequence RGVPPAPPPPAA. Residues 880–890 are compositionally biased toward basic and acidic residues; it reads DAEKPRFASNL.

The protein belongs to the potassium channel HCN family. As to quaternary structure, homotetramer. Heterotetramer with HCN2. The potassium channel is composed of a homo- or heterotetrameric complex of pore-forming subunits. Interacts with KCNE2. Interacts with the SH3 domain of CSK. Detected in brain, in particular in amygdala and hippocampus, while expression in caudate nucleus, corpus callosum, substantia nigra, subthalamic nucleus and thalamus is very low or not detectable. Detected at very low levels in muscle and pancreas.

The protein localises to the cell membrane. The catalysed reaction is Na(+)(in) = Na(+)(out). It carries out the reaction K(+)(in) = K(+)(out). Its activity is regulated as follows. Activated by cAMP, and at 10-100 times higher concentrations, also by cGMP. cAMP binding promotes tetramerization and formation of an active channel. Compared to other family members, cAMP has less stimulatory effect on HCN1 because part of the molecules already contain bound cAMP and form homotetramers when cAMP levels are low, this inherent tetramerization in HCN1 results in a weaker response to increased cAMP. Inhibited by Cs(1+), zatebradine, capsazepine and ZD7288. Functionally, hyperpolarization-activated ion channel that are permeable to sodium and potassium ions. Displays lower selectivity for K(+) over Na(+) ions. Contributes to the native pacemaker currents in heart (If) and in the generation of the I(h) current which controls neuron excitability. Participates in cerebellar mechanisms of motor learning. May mediate responses to sour stimuli. The polypeptide is Potassium/sodium hyperpolarization-activated cyclic nucleotide-gated channel 1 (HCN1) (Homo sapiens (Human)).